An 81-amino-acid chain; its full sequence is Beta-catenin-interacting protein 1 (81 aa).

Ser-59 is subject to Phosphoserine.

It belongs to the CTNNBIP1 family. As to quaternary structure, binds CTNNB1.

Its subcellular location is the cytoplasm. The protein resides in the nucleus. Prevents the interaction between CTNNB1 and TCF family members, and acts as a negative regulator of the Wnt signaling pathway. The sequence is that of Beta-catenin-interacting protein 1 (CTNNBIP1) from Homo sapiens (Human).